Consider the following 415-residue polypeptide: Actin-like protein 7B (415 aa).

The tract at residues 1–35 is disordered; sequence MATRNSPMALGTAQGDPGEAGTRPGSDAGLRDTGA. Phosphoserine is present on S6.

The protein belongs to the actin family.

The protein localises to the cytoplasm. Its subcellular location is the cytoskeleton. The protein is Actin-like protein 7B (ACTL7B) of Macaca fascicularis (Crab-eating macaque).